The sequence spans 344 residues: Arginine N-succinyltransferase (344 aa).

Leucine 125 is a binding site for succinyl-CoA. Histidine 229 serves as the catalytic Proton donor.

Belongs to the arginine N-succinyltransferase family.

The enzyme catalyses succinyl-CoA + L-arginine = N(2)-succinyl-L-arginine + CoA + H(+). Its pathway is amino-acid degradation; L-arginine degradation via AST pathway; L-glutamate and succinate from L-arginine: step 1/5. In terms of biological role, catalyzes the transfer of succinyl-CoA to arginine to produce N(2)-succinylarginine. The protein is Arginine N-succinyltransferase of Salmonella dublin (strain CT_02021853).